The primary structure comprises 159 residues: Phosphopantetheine adenylyltransferase (159 aa).

Thr-8 provides a ligand contact to substrate. ATP contacts are provided by residues 8-9 (TF) and His-16. Lys-40, Thr-72, and Arg-86 together coordinate substrate. ATP contacts are provided by residues 87–89 (GLR), Glu-97, and 122–128 (YSFLSSS).

This sequence belongs to the bacterial CoaD family. Homohexamer. Mg(2+) is required as a cofactor.

The protein localises to the cytoplasm. The enzyme catalyses (R)-4'-phosphopantetheine + ATP + H(+) = 3'-dephospho-CoA + diphosphate. The protein operates within cofactor biosynthesis; coenzyme A biosynthesis; CoA from (R)-pantothenate: step 4/5. Its function is as follows. Reversibly transfers an adenylyl group from ATP to 4'-phosphopantetheine, yielding dephospho-CoA (dPCoA) and pyrophosphate. This Prochlorococcus marinus subsp. pastoris (strain CCMP1986 / NIES-2087 / MED4) protein is Phosphopantetheine adenylyltransferase.